Reading from the N-terminus, the 272-residue chain is Undecaprenyl-diphosphatase (272 aa).

Transmembrane regions (helical) follow at residues 1–21, 39–59, 91–111, 117–137, 151–171, 196–216, 228–248, and 251–271; these read MSTL…FLPI, QGLA…MMYF, WWIL…KDFI, SALV…FADI, LGLK…IPGT, FLLS…KLIL, LGSL…LILL, and LGMM…LWFI.

The protein belongs to the UppP family.

It localises to the cell inner membrane. The catalysed reaction is di-trans,octa-cis-undecaprenyl diphosphate + H2O = di-trans,octa-cis-undecaprenyl phosphate + phosphate + H(+). In terms of biological role, catalyzes the dephosphorylation of undecaprenyl diphosphate (UPP). Confers resistance to bacitracin. The sequence is that of Undecaprenyl-diphosphatase from Colwellia psychrerythraea (strain 34H / ATCC BAA-681) (Vibrio psychroerythus).